The chain runs to 153 residues: Transcriptional repressor NrdR (153 aa).

Residues 3–34 (CPFCGHLEDRVIDSRAGGAGEVIRRRRECASC) fold into a zinc finger. Residues 49–139 (PTVVKKDGRR…VYRSFRDIDQ (91 aa)) enclose the ATP-cone domain.

This sequence belongs to the NrdR family. Requires Zn(2+) as cofactor.

Functionally, negatively regulates transcription of bacterial ribonucleotide reductase nrd genes and operons by binding to NrdR-boxes. The chain is Transcriptional repressor NrdR from Sorangium cellulosum (strain So ce56) (Polyangium cellulosum (strain So ce56)).